Here is a 1072-residue protein sequence, read N- to C-terminus: E3 ubiquitin-protein ligase RNF31 (1072 aa).

The segment at 1–485 (MPGEEEERAF…PEKQRQDKMR (485 aa)) is polyubiquitin-binding. Positions 71-142 (TLSTALNILE…SFPEGQEEPD (72 aa)) constitute a PUB domain. The interval 263–290 (QGTHLSPSLPASAQPRPQSTSLLALGDS) is disordered. Residues 265 to 280 (THLSPSLPASAQPRPQ) show a composition bias toward polar residues. Low complexity predominate over residues 281–290 (STSLLALGDS). 2 consecutive RanBP2-type zinc fingers follow at residues 299–329 (SAHL…PRGC) and 350–379 (ARGR…PRLA). Residue S383 is modified to Phosphoserine. A RanBP2-type 3 zinc finger spans residues 409–438 (QSQVWYCIHCTFCNSSPGWVCVMCNRTSSP). The disordered stretch occupies residues 443–484 (HAPRPYASSLEKGPPKPGPPRRLSAPLPSSCGDPEKQRQDKM). Low complexity predominate over residues 463–472 (RRLSAPLPSS). The residue at position 466 (S466) is a Phosphoserine. The span at 475 to 484 (DPEKQRQDKM) shows a compositional bias: basic and acidic residues. The interval 563 to 616 (GNLDEAVEECVRTRRRKVQELQSLGFGPEEGSLQALFQHGGDVSRALTELQRQR) is interaction with RBCK1. The region spanning 564–615 (NLDEAVEECVRTRRRKVQELQSLGFGPEEGSLQALFQHGGDVSRALTELQRQ) is the UBA domain. Positions 695–929 (LAQECAVCGW…KSLHGHHPRD (235 aa)) are TRIAD supradomain. The Zn(2+) site is built by C699, C702, C717, C719, C722, and C725. The RING-type 1 zinc-finger motif lies at 699–749 (CAVCGWALPHNRMQALTSCECTICPDCFRQHFTIALKEKHITDMVCPACGR). Residue K735 forms a (Microbial infection) Glycyl lysine isopeptide (Lys-Gly) (interchain with G-Cter in ubiquitin) linkage. The Zn(2+) site is built by C744 and C747. An IBR-type zinc finger spans residues 779–841 (ALFHKKLTEG…WEEQHRGRSC (63 aa)). Residue K783 forms a (Microbial infection) Glycyl lysine isopeptide (Lys-Gly) (interchain with G-Cter in ubiquitin) linkage. C799, C802, C817, C820, C825, C828, H836, C841, C871, and C874 together coordinate Zn(2+). The segment at 871 to 901 (CPKCKFSYALARGGCMHFHCTQCRHQFCSGC) adopts an RING-type 2; atypical zinc-finger fold. K875 participates in a covalent cross-link: (Microbial infection) Glycyl lysine isopeptide (Lys-Gly) (interchain with G-Cter in ubiquitin). The active site involves C885. C890, C893, C898, C901, C916, and H925 together coordinate Zn(2+). The segment at 910–1072 (KCPEPNCRVK…LGQSIPRRRK (163 aa)) is LDD domain.

The protein belongs to the RBR family. As to quaternary structure, component of the LUBAC complex (linear ubiquitin chain assembly complex) which consists of SHARPIN, RBCK1 and RNF31. LUBAC has a MW of approximately 600 kDa suggesting a heteromultimeric assembly of its subunits. Associates with the TNF-R1 signaling complex (TNF-RSC) in a stimulation-dependent manner. Interacts (via the PUB domain) with OTULIN (via the PIM motif); the interaction is direct. Interacts (via the PUB domain) with VCP (via the PIM motif). Interacts (via the PUB domain) with SPATA2 (via the PIM motif); interaction is direct and bridges RNF31 and CYLD. Interacts with CYLD; the interaction is indirect and is mediated via SPATA2. Interacts with MUSK. Interacts with CARD11, promoting linear ubiquitination of BCL10. (Microbial infection) Interacts with S.flexneri E3 ubiquitin-protein ligases IpaH1.4 and IpaH2.5, leading to its ubiquitination. Autoubiquitinated. Interaction with OTULIN is required to suppress formation of 'Met-1'-linked polyubiquitin chains and prevent subsequent inactivation of the LUBAC complex. In terms of processing, cleaved by caspase during apoptosis. Post-translationally, (Microbial infection) Ubiquitinated by S.flexneri E3 ubiquitin-protein ligases IpaH1.4 and IpaH2.5, leading to its degradation by the proteasome, thereby preventing formation of the bacterial ubiquitin coat and activation of innate immunity. In terms of tissue distribution, expressed in both normal and transformed breast epithelial cell lines.

It is found in the cytoplasm. The enzyme catalyses [E2 ubiquitin-conjugating enzyme]-S-ubiquitinyl-L-cysteine + [acceptor protein]-L-lysine = [E2 ubiquitin-conjugating enzyme]-L-cysteine + [acceptor protein]-N(6)-ubiquitinyl-L-lysine.. It participates in protein modification; protein ubiquitination. E3 ubiquitin-protein ligase component of the LUBAC complex which conjugates linear ('Met-1'-linked) polyubiquitin chains to substrates and plays a key role in NF-kappa-B activation and regulation of inflammation. LUBAC conjugates linear polyubiquitin to IKBKG and RIPK1 and is involved in activation of the canonical NF-kappa-B and the JNK signaling pathways. Linear ubiquitination mediated by the LUBAC complex interferes with TNF-induced cell death and thereby prevents inflammation. LUBAC is recruited to the TNF-R1 signaling complex (TNF-RSC) following polyubiquitination of TNF-RSC components by BIRC2 and/or BIRC3 and to conjugate linear polyubiquitin to IKBKG and possibly other components contributing to the stability of the complex. The LUBAC complex is also involved in innate immunity by conjugating linear polyubiquitin chains at the surface of bacteria invading the cytosol to form the ubiquitin coat surrounding bacteria. LUBAC is not able to initiate formation of the bacterial ubiquitin coat, and can only promote formation of linear polyubiquitins on pre-existing ubiquitin. Recruited to the surface of bacteria by RNF213, which initiates the bacterial ubiquitin coat. The bacterial ubiquitin coat acts as an 'eat-me' signal for xenophagy and promotes NF-kappa-B activation. Together with OTULIN, the LUBAC complex regulates the canonical Wnt signaling during angiogenesis. RNF31 is required for linear ubiquitination of BCL10, thereby promoting TCR-induced NF-kappa-B activation. Binds polyubiquitin of different linkage types. This chain is E3 ubiquitin-protein ligase RNF31, found in Homo sapiens (Human).